A 239-amino-acid polypeptide reads, in one-letter code: Fatty acid metabolism regulator protein (239 aa).

Residues 6-74 (QSPAGFAEEY…HGKPTKVNNF (69 aa)) enclose the HTH gntR-type domain. The H-T-H motif DNA-binding region spans 34-53 (ERELSELIGVTRTTLREVLQ).

As to quaternary structure, homodimer.

It is found in the cytoplasm. In terms of biological role, multifunctional regulator of fatty acid metabolism. The protein is Fatty acid metabolism regulator protein of Shigella flexneri.